Here is a 511-residue protein sequence, read N- to C-terminus: MGASVALTFLLLLATFRAGSGHDEVETRECIYYNANWELEKTNQSGVERLVEGKKDKRLHCYASWRNNSGFIELVKKGCWLDDFNCYDRQECIAKEENPQVFFCCCEGNYCNKKFTHLPEVETFDPKPQPSASVLNILIYSLLPIVGLSMAILLAFWMYRHRKPSYGHVEINEDPGLPPPSPLVGLKPLQLLDIKARGRFGCVWKARLLNEYVAVKIFPVQDKQSWQCEKEIFTTPGMKHENLLEFIAAEKRGSNLEMELWLITAFHDKGSLTDYLKGNLVSWNELCHITETMARGLAYLHEDVPRCKGEGHKPAIAHRDFKSKNVLLRNDLTAILADFGLAVRFEPGKPPGDTHGQVGTRRYMAPEVLEGAINFQRDSFLRIDMYAMGLVLWEIVSRCTAADGPVDEYLLPFEEEIGQHPSLEDLQEVVVHKKIRPVFKDHWLKHPGLAQLCVTIEECWDHDAEARLSAGCVEERISQIRKSVNGTTSDCLVSIVTSVTNVDLPPKESSI.

An N-terminal signal peptide occupies residues 1–20; sequence MGASVALTFLLLLATFRAGS. Topologically, residues 21–136 are extracellular; the sequence is GHDEVETREC…KPQPSASVLN (116 aa). Cys-30 and Cys-61 are oxidised to a cystine. 2 N-linked (GlcNAc...) asparagine glycosylation sites follow: Asn-43 and Asn-67. 3 disulfides stabilise this stretch: Cys-86–Cys-105, Cys-92–Cys-104, and Cys-106–Cys-111. The chain crosses the membrane as a helical span at residues 137 to 157; sequence ILIYSLLPIVGLSMAILLAFW. The Cytoplasmic portion of the chain corresponds to 158–511; the sequence is MYRHRKPSYG…VDLPPKESSI (354 aa). One can recognise a Protein kinase domain in the interval 189-477; sequence LQLLDIKARG…LSAGCVEERI (289 aa). Residues 195-203 and Lys-216 contribute to the ATP site; that span reads KARGRFGCV. The active-site Proton acceptor is the Asp-320.

It belongs to the protein kinase superfamily. TKL Ser/Thr protein kinase family. TGFB receptor subfamily.

Its subcellular location is the membrane. It catalyses the reaction L-threonyl-[receptor-protein] + ATP = O-phospho-L-threonyl-[receptor-protein] + ADP + H(+). The enzyme catalyses L-seryl-[receptor-protein] + ATP = O-phospho-L-seryl-[receptor-protein] + ADP + H(+). Receptor for activin A, activin B and inhibin A. Involved in transmembrane signaling. This is Activin receptor type-2B (acvr2b) from Xenopus laevis (African clawed frog).